Consider the following 202-residue polypeptide: Peptidyl-tRNA hydrolase (202 aa).

Tyr14 is a binding site for tRNA. The Proton acceptor role is filled by His19. Residues Tyr64, Asn66, and Asn112 each contribute to the tRNA site.

This sequence belongs to the PTH family. Monomer.

Its subcellular location is the cytoplasm. It carries out the reaction an N-acyl-L-alpha-aminoacyl-tRNA + H2O = an N-acyl-L-amino acid + a tRNA + H(+). Its function is as follows. Hydrolyzes ribosome-free peptidyl-tRNAs (with 1 or more amino acids incorporated), which drop off the ribosome during protein synthesis, or as a result of ribosome stalling. In terms of biological role, catalyzes the release of premature peptidyl moieties from peptidyl-tRNA molecules trapped in stalled 50S ribosomal subunits, and thus maintains levels of free tRNAs and 50S ribosomes. The chain is Peptidyl-tRNA hydrolase from Xanthobacter autotrophicus (strain ATCC BAA-1158 / Py2).